The sequence spans 78 residues: Large ribosomal subunit protein bL28 (78 aa).

Residues 1-25 form a disordered region; that stretch reads MSRVCQVTGKRPAVGNNRSHAKNAT.

This sequence belongs to the bacterial ribosomal protein bL28 family.

The polypeptide is Large ribosomal subunit protein bL28 (Aliivibrio salmonicida (strain LFI1238) (Vibrio salmonicida (strain LFI1238))).